A 122-amino-acid polypeptide reads, in one-letter code: Large ribosomal subunit protein uL14c (122 aa).

The protein belongs to the universal ribosomal protein uL14 family. Part of the 50S ribosomal subunit.

The protein resides in the plastid. The protein localises to the chloroplast. Functionally, binds to 23S rRNA. This Nandina domestica (Heavenly bamboo) protein is Large ribosomal subunit protein uL14c.